A 1503-amino-acid chain; its full sequence is DNA-directed RNA polymerase subunit beta' (1503 aa).

Cys71, Cys73, Cys86, and Cys89 together coordinate Zn(2+). 3 residues coordinate Mg(2+): Asp470, Asp472, and Asp474. Positions 800, 874, 881, and 884 each coordinate Zn(2+).

It belongs to the RNA polymerase beta' chain family. As to quaternary structure, the RNAP catalytic core consists of 2 alpha, 1 beta, 1 beta' and 1 omega subunit. When a sigma factor is associated with the core the holoenzyme is formed, which can initiate transcription. The cofactor is Mg(2+). Zn(2+) is required as a cofactor.

It carries out the reaction RNA(n) + a ribonucleoside 5'-triphosphate = RNA(n+1) + diphosphate. In terms of biological role, DNA-dependent RNA polymerase catalyzes the transcription of DNA into RNA using the four ribonucleoside triphosphates as substrates. The protein is DNA-directed RNA polymerase subunit beta' of Sulfurimonas denitrificans (strain ATCC 33889 / DSM 1251) (Thiomicrospira denitrificans (strain ATCC 33889 / DSM 1251)).